A 273-amino-acid polypeptide reads, in one-letter code: Energy-coupling factor transporter ATP-binding protein EcfA (273 aa).

Residues 2–237 (ISIRDLTYFY…RASLLALGLA (236 aa)) enclose the ABC transporter domain. Residue 36–43 (GRNGSGKS) coordinates ATP.

Belongs to the ABC transporter superfamily. Energy-coupling factor EcfA family. Forms a stable energy-coupling factor (ECF) transporter complex composed of 2 membrane-embedded substrate-binding proteins (S component), 2 ATP-binding proteins (A component) and 2 transmembrane proteins (T component).

The protein resides in the cell membrane. In terms of biological role, ATP-binding (A) component of a common energy-coupling factor (ECF) ABC-transporter complex. Unlike classic ABC transporters this ECF transporter provides the energy necessary to transport a number of different substrates. This is Energy-coupling factor transporter ATP-binding protein EcfA from Syntrophomonas wolfei subsp. wolfei (strain DSM 2245B / Goettingen).